The chain runs to 534 residues: Cytochrome P450 monooxygenase AN1598 (534 aa).

N-linked (GlcNAc...) asparagine glycosylation is present at Asn-3. Residues 25–45 (LYLEILGVLSVVYLLQTLVAY) traverse the membrane as a helical segment. An N-linked (GlcNAc...) asparagine glycan is attached at Asn-95. Cys-464 lines the heme pocket. The N-linked (GlcNAc...) asparagine glycan is linked to Asn-498.

This sequence belongs to the cytochrome P450 family. Heme serves as cofactor.

The protein resides in the membrane. It participates in secondary metabolite biosynthesis; terpenoid biosynthesis. Bifunctional terpene synthase; part of the gene cluster that mediates the biosynthesis of the diterpene ent-pimara-8(14),15-diene (PD). Within the cluster, the HMG-CoA reductase AN1593 functions in the mevalonate pathway, which produces isoprenoid precursors. The geranylgeranyl pyrophosphate (GGPP) synthase AN1592 is needed in the formation of GGPP, the precursor for diterpenes. Lastly, the pimaradiene synthase pbcA performs the 2 cyclization steps that convert GGPP to ent-pimara-8(14),15-diene. The putative roles of the remaining cluster enzymes in ent-pimara-8(14),15-diene biosynthesis is unclear. The cytochrome P450 monooxygenase AN1598, the glutathione S-transferase AN1595, the oxidoreductases AN1596 and AN1597 probably function as decorative enzymes. It is possible that in biological conditions the compound is oxidized to ent-pimara-8(14),15-dien-19-oic acid, which is a bioactive diterpene compound predominant in many plant extracts. This is Cytochrome P450 monooxygenase AN1598 from Emericella nidulans (strain FGSC A4 / ATCC 38163 / CBS 112.46 / NRRL 194 / M139) (Aspergillus nidulans).